We begin with the raw amino-acid sequence, 378 residues long: tRNA-specific 2-thiouridylase MnmA (378 aa).

Residues 12-19 (GLSGGVDS) and methionine 38 each bind ATP. The interval 98–100 (NPD) is interaction with target base in tRNA. Catalysis depends on cysteine 103, which acts as the Nucleophile. An intrachain disulfide couples cysteine 103 to cysteine 201. Glycine 127 is an ATP binding site. The interval 151–153 (KDQ) is interaction with tRNA. The active-site Cysteine persulfide intermediate is the cysteine 201. Residues 319 to 320 (RY) form an interaction with tRNA region.

It belongs to the MnmA/TRMU family.

It localises to the cytoplasm. It catalyses the reaction S-sulfanyl-L-cysteinyl-[protein] + uridine(34) in tRNA + AH2 + ATP = 2-thiouridine(34) in tRNA + L-cysteinyl-[protein] + A + AMP + diphosphate + H(+). Catalyzes the 2-thiolation of uridine at the wobble position (U34) of tRNA, leading to the formation of s(2)U34. The protein is tRNA-specific 2-thiouridylase MnmA of Paracidovorax citrulli (strain AAC00-1) (Acidovorax citrulli).